The following is a 216-amino-acid chain: Large ribosomal subunit protein bL25 (216 aa).

The tract at residues 184-216 (VPPTSDVEEEEGDEDLEEDVEETAAEEEEGVEE) is disordered. Residues 189–216 (DVEEEEGDEDLEEDVEETAAEEEEGVEE) are compositionally biased toward acidic residues.

This sequence belongs to the bacterial ribosomal protein bL25 family. CTC subfamily. Part of the 50S ribosomal subunit; part of the 5S rRNA/L5/L18/L25 subcomplex. Contacts the 5S rRNA. Binds to the 5S rRNA independently of L5 and L18.

This is one of the proteins that binds to the 5S RNA in the ribosome where it forms part of the central protuberance. In Desulforapulum autotrophicum (strain ATCC 43914 / DSM 3382 / VKM B-1955 / HRM2) (Desulfobacterium autotrophicum), this protein is Large ribosomal subunit protein bL25.